Here is a 157-residue protein sequence, read N- to C-terminus: GDP-mannose mannosyl hydrolase (157 aa).

Substrate-binding positions include 2–3 (FL), Phe-8, and Arg-36. The 151-residue stretch at 3–153 (LRQEDFAAVV…SRAYFSPDAP (151 aa)) folds into the Nudix hydrolase domain. Mg(2+) contacts are provided by Gly-49, Glu-69, and Gln-122. The Nudix box motif lies at 50-71 (GRVCKDETLEAAFARLTQAELG).

This sequence belongs to the Nudix hydrolase family. Homodimer. The cofactor is Mg(2+).

The catalysed reaction is GDP-alpha-D-mannose + H2O = D-mannose + GDP + H(+). In terms of biological role, hydrolyzes GDP-mannose. The polypeptide is GDP-mannose mannosyl hydrolase (Salmonella typhi).